The primary structure comprises 508 residues: Lysine--tRNA ligase (508 aa).

Residues Glu-418 and Glu-425 each coordinate Mg(2+).

This sequence belongs to the class-II aminoacyl-tRNA synthetase family. Homodimer. It depends on Mg(2+) as a cofactor.

It localises to the cytoplasm. It carries out the reaction tRNA(Lys) + L-lysine + ATP = L-lysyl-tRNA(Lys) + AMP + diphosphate. This is Lysine--tRNA ligase from Burkholderia ambifaria (strain MC40-6).